Reading from the N-terminus, the 633-residue chain is DNA-directed RNA polymerase subunit beta' (633 aa).

Positions 72, 74, 87, and 90 each coordinate Zn(2+). Residues D468, D470, and D472 each contribute to the Mg(2+) site.

It belongs to the RNA polymerase beta' chain family. RpoC1 subfamily. In plastids the minimal PEP RNA polymerase catalytic core is composed of four subunits: alpha, beta, beta', and beta''. When a (nuclear-encoded) sigma factor is associated with the core the holoenzyme is formed, which can initiate transcription. Mg(2+) is required as a cofactor. Requires Zn(2+) as cofactor.

It localises to the plastid. It is found in the chloroplast. The catalysed reaction is RNA(n) + a ribonucleoside 5'-triphosphate = RNA(n+1) + diphosphate. DNA-dependent RNA polymerase catalyzes the transcription of DNA into RNA using the four ribonucleoside triphosphates as substrates. This is DNA-directed RNA polymerase subunit beta' from Cyanidium caldarium (Red alga).